Consider the following 337-residue polypeptide: 2-oxoglutarate-dependent dioxygenase frbA (337 aa).

The Fe2OG dioxygenase domain occupies 175-290 (CSAELRLNHY…RHSLAYFGKP (116 aa)). Fe cation-binding residues include histidine 202, aspartate 204, and histidine 262. Arginine 281 contacts 2-oxoglutarate.

The protein belongs to the iron/ascorbate-dependent oxidoreductase family. The cofactor is Fe(2+).

Its pathway is antifungal biosynthesis. Functionally, 2-oxoglutarate-dependent dioxygenase; part of the gene cluster that mediates the biosynthesis of the antifungal antibiotic FR901469, an inhibitor of beta-1,3-glucansynthase, exerting antifungal activity against the pathogenes Candida albicans and Aspergillus fumigatus. FR901469 is a cyclic depsipeptide containing 12 amino acid residues and a fatty acid chain. The NRPS frbI contains 12 modules responsible for the formation of the depsipeptide backbone which is denoted as Acyl-Thr-Ala-Tyr-Val-4OHPro-Thr-Thr-3OHPro-threo3OHGln-Gly-Thr-Orn-OH (C71H116N14O23). The PKS frbB is probably involved in the production of the hydrocarbon chain, and the acyl-CoA ligase frbC might be involved in the transport of the chain to the peptide ptoduct of frbI. Because FR901469 contains 3 hydroxylated amino acid residues, the 3 oxygenases frbA, frbH, and frbJ might be participating in amino acid hydroxylation. As no thioesterase domains were detected in frbI or frbB, the thioesterases frbD and frbE may instead release and cyclize the products of the NRPS and PKS, respectively. The chain is 2-oxoglutarate-dependent dioxygenase frbA from Dothideomycetidae sp. (strain 11243) (Fungal sp. (strain No.11243)).